Here is a 182-residue protein sequence, read N- to C-terminus: UPF0316 protein BCAH820_3389 (182 aa).

3 helical membrane-spanning segments follow: residues 6–26 (LIFV…ILLV), 32–52 (SAAA…GIVF), and 58–78 (WMNI…GGYI).

It belongs to the UPF0316 family.

The protein resides in the cell membrane. The sequence is that of UPF0316 protein BCAH820_3389 from Bacillus cereus (strain AH820).